We begin with the raw amino-acid sequence, 79 residues long: Protein VdcD (79 aa).

Functionally, involved in the non-oxidative decarboxylation and detoxification of phenolic derivatives under both aerobic and anaerobic conditions, however the precise biochemical function of VdcD in metabolism of phenolic acid is unknown. This chain is Protein VdcD, found in Streptomyces sp. (strain D7).